Here is a 651-residue protein sequence, read N- to C-terminus: Choline transporter-like protein 1 (651 aa).

Topologically, residues 1-25 (MGCCGSTQNSKRDWRPLEEHSCTDI) are cytoplasmic. Residues 26 to 46 (PWLLLFILFCVGMGFICGFSI) traverse the membrane as a helical segment. At 47 to 208 (ATGAASRLVF…RLISGVMTSK (162 aa)) the chain is on the extracellular side. Asparagine 131 and asparagine 176 each carry an N-linked (GlcNAc...) asparagine glycan. The helical transmembrane segment at 209-229 (EIIMGLCLLSLVLSMILMVII) threads the bilayer. Topologically, residues 230–234 (RYISR) are cytoplasmic. The chain crosses the membrane as a helical span at residues 235 to 255 (VLVWIITILVVLGSLGGTGVL). Residues 256–284 (WWLYADNKKSLNENLPPDQLQVSKDNLQA) are Extracellular-facing. A helical membrane pass occupies residues 285-305 (LLVYAIAATVFTVILLLMMLI). Topologically, residues 306–311 (MRKRVA) are cytoplasmic. Residues 312–332 (LTIALFNVAGKVFIHLPLLVF) form a helical membrane-spanning segment. At 333 to 334 (QP) the chain is on the extracellular side. Residues 335-355 (FWTFFALLLFWVYWVMVLLFL) traverse the membrane as a helical segment. Residues 356 to 376 (GTAGDPFTNEQGFVEFRINGP) are Cytoplasmic-facing. The chain crosses the membrane as a helical span at residues 377 to 397 (LQYMWWYHLVGLIWISEFILA). The Extracellular segment spans residues 398 to 438 (CQQMTIAGAVVTYYFTRNKNDLPFTPILASVNRLIRYHLGT). A helical transmembrane segment spans residues 439 to 459 (VAKGAFIITLVKIPRMILMYI). At 460–533 (HSQLKGKENA…RVAAINTVGD (74 aa)) the chain is on the cytoplasmic side. The chain crosses the membrane as a helical span at residues 534-554 (FMLFLGKILIVSCTGLAGIML). Residues 555 to 562 (LNYQRDYT) are Extracellular-facing. Residues 563–583 (VWVLPLIIVCLFAFLVAHCFL) traverse the membrane as a helical segment. Over 584 to 651 (SIYEMVVDVL…KPMASGTSTA (68 aa)) the chain is Cytoplasmic. The disordered stretch occupies residues 629 to 651 (LKEPGSTAEGRELKPMASGTSTA).

It belongs to the CTL (choline transporter-like) family.

It is found in the cell membrane. The protein localises to the mitochondrion outer membrane. It catalyses the reaction choline(out) + n H(+)(in) = choline(in) + n H(+)(out). The catalysed reaction is ethanolamine(out) + n H(+)(in) = ethanolamine(in) + n H(+)(out). Functionally, choline/H+ antiporter. Also acts as a high-affinity ethanolamine/H+ antiporter, regulating the supply of extracellular ethanolamine (Etn) for the CDP-Etn pathway, redistribute intracellular Etn and balance the CDP-Cho and CDP-Etn arms of the Kennedy pathway. Involved in membrane synthesis and myelin production. This is Choline transporter-like protein 1 (slc44a1) from Xenopus laevis (African clawed frog).